The sequence spans 351 residues: Ion-translocating oxidoreductase complex subunit D (351 aa).

The next 4 membrane-spanning stretches (helical) occupy residues 20 to 40 (IMLL…YFFG), 44 to 64 (LIQV…TLSL), 89 to 109 (LPPL…IIIA), and 123 to 143 (PAMI…TSWL). Position 187 is an FMN phosphoryl threonine (T187). A run of 5 helical transmembrane segments spans residues 215-235 (LSGI…LFLL), 244-264 (IPVS…VIAP), 267-287 (FAPP…FFIA), 301-321 (LIFG…GGYP), and 322-342 (DGVA…DYYT).

The protein belongs to the NqrB/RnfD family. As to quaternary structure, the complex is composed of six subunits: RnfA, RnfB, RnfC, RnfD, RnfE and RnfG. It depends on FMN as a cofactor.

The protein resides in the cell inner membrane. Its function is as follows. Part of a membrane-bound complex that couples electron transfer with translocation of ions across the membrane. The protein is Ion-translocating oxidoreductase complex subunit D of Pectobacterium carotovorum subsp. carotovorum (strain PC1).